Consider the following 171-residue polypeptide: Crossover junction endodeoxyribonuclease RuvC (171 aa).

Residues Asp-12, Glu-72, and Asp-144 contribute to the active site. Positions 12, 72, and 144 each coordinate Mg(2+).

It belongs to the RuvC family. In terms of assembly, homodimer which binds Holliday junction (HJ) DNA. The HJ becomes 2-fold symmetrical on binding to RuvC with unstacked arms; it has a different conformation from HJ DNA in complex with RuvA. In the full resolvosome a probable DNA-RuvA(4)-RuvB(12)-RuvC(2) complex forms which resolves the HJ. Mg(2+) is required as a cofactor.

The protein localises to the cytoplasm. The catalysed reaction is Endonucleolytic cleavage at a junction such as a reciprocal single-stranded crossover between two homologous DNA duplexes (Holliday junction).. The RuvA-RuvB-RuvC complex processes Holliday junction (HJ) DNA during genetic recombination and DNA repair. Endonuclease that resolves HJ intermediates. Cleaves cruciform DNA by making single-stranded nicks across the HJ at symmetrical positions within the homologous arms, yielding a 5'-phosphate and a 3'-hydroxyl group; requires a central core of homology in the junction. The consensus cleavage sequence is 5'-(A/T)TT(C/G)-3'. Cleavage occurs on the 3'-side of the TT dinucleotide at the point of strand exchange. HJ branch migration catalyzed by RuvA-RuvB allows RuvC to scan DNA until it finds its consensus sequence, where it cleaves and resolves the cruciform DNA. The protein is Crossover junction endodeoxyribonuclease RuvC of Afipia carboxidovorans (strain ATCC 49405 / DSM 1227 / KCTC 32145 / OM5) (Oligotropha carboxidovorans).